Here is a 1211-residue protein sequence, read N- to C-terminus: Sterol 3-beta-glucosyltransferase (1211 aa).

Residues 1 to 10 show a composition bias toward basic and acidic residues; that stretch reads MSQLRPRDSS. The interval 1–61 is disordered; that stretch reads MSQLRPRDSS…DETEAEDDID (61 aa). One can recognise a GRAM 1 domain in the interval 196–235; that stretch reads EKLKTTFDLSDDDEFVNDYPCWLLHEVFLQGHIYITSRYL. Residues 248–347 enclose the PH domain; the sequence is VTMSGALSIR…WVTDLRKHIF (100 aa). 2 disordered regions span residues 422-452 and 500-531; these read LTDSDSSESDSDVSGSETNGRSTHRKSKLSR and VVPNDNDSELKQDHAGDAPKDSEEPSTKPSNW. Acidic residues predominate over residues 423 to 432; the sequence is TDSDSSESDS. The span at 507–525 shows a compositional bias: basic and acidic residues; that stretch reads SELKQDHAGDAPKDSEEPS. Residues 586-652 enclose the GRAM 2 domain; that stretch reads SRFRKHFSLP…SDIENVYNLK (67 aa). Ser770, Arg771, Asp773, Asn1046, Asn1072, Val1073, His1075, His1088, Ser1091, Gly1092, Thr1093, Asp1112, and Gln1113 together coordinate UDP-alpha-D-glucose.

This sequence belongs to the glycosyltransferase 28 family.

Its subcellular location is the cytoplasm. The protein localises to the preautophagosomal structure membrane. It carries out the reaction a sterol + UDP-alpha-D-glucose = a sterol 3-beta-D-glucoside + UDP + H(+). It catalyses the reaction ergosterol + UDP-alpha-D-glucose = ergosteryl 3-beta-D-glucoside + UDP + H(+). Sterol glycosyltransferase responsible for the glycosylation of ergosterol to form ergosterol-glucoside. Shows also activity in vitro on other sterols such as cholesterol, beta-sitosterol, stigmasterol and tomatidine. Probable sterol 3-beta-glucosyltransferase that mediates autophagic degradation of peroxisomes (pexophagy). This is Sterol 3-beta-glucosyltransferase from Komagataella phaffii (strain GS115 / ATCC 20864) (Yeast).